The sequence spans 299 residues: tRNA dimethylallyltransferase (299 aa).

13–20 (GPTASGKT) lines the ATP pocket. 15-20 (TASGKT) lines the substrate pocket. The interaction with substrate tRNA stretch occupies residues 38–41 (DSRQ).

Belongs to the IPP transferase family. In terms of assembly, monomer. Mg(2+) serves as cofactor.

The catalysed reaction is adenosine(37) in tRNA + dimethylallyl diphosphate = N(6)-dimethylallyladenosine(37) in tRNA + diphosphate. Catalyzes the transfer of a dimethylallyl group onto the adenine at position 37 in tRNAs that read codons beginning with uridine, leading to the formation of N6-(dimethylallyl)adenosine (i(6)A). This chain is tRNA dimethylallyltransferase, found in Prochlorococcus marinus (strain AS9601).